Here is a 1187-residue protein sequence, read N- to C-terminus: DNA-directed RNA polymerase subunit beta (1187 aa).

The tract at residues 1150-1187 is disordered; it reads KDEDDDPASSADDLGFNIGARPDAAAKEDQKAEEPEYQ. Residues 1173 to 1187 are compositionally biased toward basic and acidic residues; sequence AAAKEDQKAEEPEYQ.

It belongs to the RNA polymerase beta chain family. As to quaternary structure, the RNAP catalytic core consists of 2 alpha, 1 beta, 1 beta' and 1 omega subunit. When a sigma factor is associated with the core the holoenzyme is formed, which can initiate transcription.

It catalyses the reaction RNA(n) + a ribonucleoside 5'-triphosphate = RNA(n+1) + diphosphate. DNA-dependent RNA polymerase catalyzes the transcription of DNA into RNA using the four ribonucleoside triphosphates as substrates. The polypeptide is DNA-directed RNA polymerase subunit beta (Bifidobacterium longum subsp. infantis (strain ATCC 15697 / DSM 20088 / JCM 1222 / NCTC 11817 / S12)).